The sequence spans 166 residues: Cofilin-2 (166 aa).

Ala2 carries the post-translational modification N-acetylalanine. The residue at position 3 (Ser3) is a Phosphoserine. The ADF-H domain occupies 4 to 153 (GVTVNDEVIK…KDRSTLGEKL (150 aa)). Thr6 carries the post-translational modification Phosphothreonine. A Nuclear localization signal motif is present at residues 30–34 (KKRKK).

The protein belongs to the actin-binding proteins ADF family. In terms of assembly, interacts with CSRP3; possibly two molecules of CFL2 can interact with one molecule if CSRP3. Post-translationally, the phosphorylation of Ser-24 may prevent recognition of the nuclear localization signal. Predominantly expressed in skeletal muscle.

The protein resides in the nucleus matrix. The protein localises to the cytoplasm. It is found in the cytoskeleton. In terms of biological role, controls reversibly actin polymerization and depolymerization in a pH-sensitive manner. It has the ability to bind G- and F-actin in a 1:1 ratio of cofilin to actin. It is the major component of intranuclear and cytoplasmic actin rods. Required for muscle maintenance. May play a role during the exchange of alpha-actin forms during the early postnatal remodeling of the sarcomere. The protein is Cofilin-2 (Cfl2) of Mus musculus (Mouse).